The chain runs to 318 residues: UDP-N-acetylenolpyruvoylglucosamine reductase (318 aa).

The region spanning 38 to 204 (IGGICPVVVE…LGIEILLKEG (167 aa)) is the FAD-binding PCMH-type domain. R182 is a catalytic residue. Residues 212–232 (SLKDKRDRRNSSQPENKKSAG) form a disordered region. The segment covering 213–229 (LKDKRDRRNSSQPENKK) has biased composition (basic and acidic residues). S233 (proton donor) is an active-site residue. Residue E310 is part of the active site.

It belongs to the MurB family. The cofactor is FAD.

The protein resides in the cytoplasm. The catalysed reaction is UDP-N-acetyl-alpha-D-muramate + NADP(+) = UDP-N-acetyl-3-O-(1-carboxyvinyl)-alpha-D-glucosamine + NADPH + H(+). It participates in cell wall biogenesis; peptidoglycan biosynthesis. In terms of biological role, cell wall formation. The sequence is that of UDP-N-acetylenolpyruvoylglucosamine reductase from Leptospira borgpetersenii serovar Hardjo-bovis (strain L550).